A 482-amino-acid polypeptide reads, in one-letter code: Aspartyl/glutamyl-tRNA(Asn/Gln) amidotransferase subunit B (482 aa).

This sequence belongs to the GatB/GatE family. GatB subfamily. In terms of assembly, heterotrimer of A, B and C subunits.

The catalysed reaction is L-glutamyl-tRNA(Gln) + L-glutamine + ATP + H2O = L-glutaminyl-tRNA(Gln) + L-glutamate + ADP + phosphate + H(+). It catalyses the reaction L-aspartyl-tRNA(Asn) + L-glutamine + ATP + H2O = L-asparaginyl-tRNA(Asn) + L-glutamate + ADP + phosphate + 2 H(+). In terms of biological role, allows the formation of correctly charged Asn-tRNA(Asn) or Gln-tRNA(Gln) through the transamidation of misacylated Asp-tRNA(Asn) or Glu-tRNA(Gln) in organisms which lack either or both of asparaginyl-tRNA or glutaminyl-tRNA synthetases. The reaction takes place in the presence of glutamine and ATP through an activated phospho-Asp-tRNA(Asn) or phospho-Glu-tRNA(Gln). This chain is Aspartyl/glutamyl-tRNA(Asn/Gln) amidotransferase subunit B, found in Thermotoga neapolitana (strain ATCC 49049 / DSM 4359 / NBRC 107923 / NS-E).